The following is a 629-amino-acid chain: Pentatricopeptide repeat-containing protein At1g62930, chloroplastic (629 aa).

A chloroplast-targeting transit peptide spans 1–41; that stretch reads MTSCVHLGIVASQSKKMSLAKRFAQLRKASPLFSLRGVYFS. PPR repeat units follow at residues 79–113, 114–148, 149–183, 184–218, 219–253, 254–288, 289–323, 324–358, 359–393, 394–428, 429–463, 464–498, 499–533, 534–568, and 569–603; these read SIVEFNKLLSAIAKMNKFDLVISLGERMQNLRISY, DLYSYNILINCFCRRSQLPLALAVLGKMMKLGYEP, DIVTLSSLLNGYCHGKRISEAVALVDQMFVMEYQP, NTVTFNTLIHGLFLHNKASEAVALIDRMVARGCQP, DLFTYGTVVNGLCKRGDIDLALSLLKKMEKGKIEA, DVVIYTTIIDALCNYKNVNDALNLFTEMDNKGIRP, NVVTYNSLIRCLCNYGRWSDASRLLSDMIERKINP, NVVTFSALIDAFVKEGKLVEAEKLYDEMIKRSIDP, DIFTYSSLINGFCMHDRLDEAKHMFELMISKDCFP, NVVTYNTLIKGFCKAKRVEEGMELFREMSQRGLVG, NTVTYNTLIQGLFQAGDCDMAQKIFKKMVSDGVPP, DIITYSILLDGLCKYGKLEKALVVFEYLQKSKMEP, DIYTYNIMIEGMCKAGKVEDGWDLFCSLSLKGVKP, NVIIYTTMISGFCRKGLKEEADALFREMKEDGTLP, and NSGTYNTLIRARLRDGDKAASAELIKEMRSCGFVG.

It belongs to the PPR family. P subfamily.

The protein resides in the plastid. The protein localises to the chloroplast. This Arabidopsis thaliana (Mouse-ear cress) protein is Pentatricopeptide repeat-containing protein At1g62930, chloroplastic.